A 383-amino-acid chain; its full sequence is Putative glutamate--cysteine ligase 2 (383 aa).

The protein belongs to the glutamate--cysteine ligase type 2 family. YbdK subfamily.

It carries out the reaction L-cysteine + L-glutamate + ATP = gamma-L-glutamyl-L-cysteine + ADP + phosphate + H(+). ATP-dependent carboxylate-amine ligase which exhibits weak glutamate--cysteine ligase activity. This Clavibacter michiganensis subsp. michiganensis (strain NCPPB 382) protein is Putative glutamate--cysteine ligase 2.